A 132-amino-acid chain; its full sequence is NADH-quinone oxidoreductase subunit A 2 (132 aa).

A run of 3 helical transmembrane segments spans residues 10 to 30 (WALL…LGLG), 66 to 86 (LVAM…LWAV), and 93 to 113 (WAGF…LFYL).

It belongs to the complex I subunit 3 family. As to quaternary structure, NDH-1 is composed of 13 different subunits. Subunits NuoA, H, J, K, L, M, N constitute the membrane sector of the complex.

The protein resides in the cell inner membrane. The catalysed reaction is a quinone + NADH + 5 H(+)(in) = a quinol + NAD(+) + 4 H(+)(out). Its function is as follows. NDH-1 shuttles electrons from NADH, via FMN and iron-sulfur (Fe-S) centers, to quinones in the respiratory chain. The immediate electron acceptor for the enzyme in this species is believed to be ubiquinone. Couples the redox reaction to proton translocation (for every two electrons transferred, four hydrogen ions are translocated across the cytoplasmic membrane), and thus conserves the redox energy in a proton gradient. This is NADH-quinone oxidoreductase subunit A 2 from Pseudomonas aeruginosa (strain UCBPP-PA14).